Here is a 221-residue protein sequence, read N- to C-terminus: GTP-binding nuclear protein Ran-1 (221 aa).

The Small GTPase Ran-type domain occupies aspartate 10–aspartate 174. GTP is bound at residue aspartate 21–threonine 28. Residues lysine 40–valine 48 form a switch-I region. GTP is bound by residues glycine 71, asparagine 125–aspartate 128, and serine 153–lysine 155. Residues glycine 71 to glutamine 87 form a switch-II region.

The protein belongs to the small GTPase superfamily. Ran family. In terms of assembly, found in a nuclear export complex with RanGTP, exportin and pre-miRNA. Interacts with RANBP1A and RANBP1B. Interacts with TRN1. Interacts with ATX1. Interacts with KPNB1. Binds to XPO1. Interacts with MOS14. Binds to NTF2B.

It is found in the nucleus. In terms of biological role, GTP-binding protein involved in nucleocytoplasmic transport. Required for the import of protein into the nucleus and also for RNA export. Involved in chromatin condensation and control of cell cycle. This is GTP-binding nuclear protein Ran-1 (RAN1) from Arabidopsis thaliana (Mouse-ear cress).